A 1174-amino-acid polypeptide reads, in one-letter code: Male determiner protein Mdmd(III) (1174 aa).

Residues 1-15 (MNATDAESRKPENKP) show a composition bias toward basic and acidic residues. Disordered stretches follow at residues 1–51 (MNAT…SGQR), 80–109 (KDGSNEMLPKEDSINTNHNYTTDSNEHPVE), and 136–259 (KQLS…LRRS). Residues 16–35 (SSESSSSGSTSGSSDGEVSS) show a composition bias toward low complexity. Residues 36 to 47 (KTYFKNNKSKVL) show a composition bias toward polar residues. Over residues 80-92 (KDGSNEMLPKEDS) the composition is skewed to basic and acidic residues. The segment covering 93–102 (INTNHNYTTD) has biased composition (polar residues). Positions 138-153 (LSAYRSRSRSTRLSYS) are enriched in low complexity. Positions 167–180 (SRYKKSVLRNRRTS) are enriched in basic residues. Residues 183 to 200 (HGRDSSTTKRSVSRDKDN) show a composition bias toward basic and acidic residues. A compositionally biased stretch (basic residues) spans 201–223 (RLRRRIGSSRSHTRSHSRFRRSE). Basic and acidic residues predominate over residues 235–259 (RSQERRHERRRSMSSDYERIALRRS). Positions 348-531 (KKYIHGYINK…KVLFQVRRDG (184 aa)) constitute an MIF4G domain. The MI domain maps to 641–757 (ALRRTIYLTL…SWDVLDCIKL (117 aa)). Positions 840–857 (SAPSSSSSSSLSSELSAP) are enriched in low complexity. Disordered stretches follow at residues 840-1045 (SAPS…SRTK) and 1096-1133 (KDNYGNRQNHEISQRHDSEIKRRREERKKRHHEKNHSR). The span at 869–909 (KKKHKGKNKKMTKKKNPSKKKEKTKKFVGKNKIAAKNKTIK) shows a compositional bias: basic residues. Basic and acidic residues predominate over residues 910–924 (RRTDKDNSSSKDNFL). Residues 926–957 (SESSSNESISLDSLSSELFAPSSYSSSESSND) are compositionally biased toward low complexity. Residues 963–1001 (KHKGKNKKMTKKKNPSNKKEKTKKKLSKNKKAPNKNTKK) show a composition bias toward basic residues. A compositionally biased stretch (low complexity) spans 1010-1020 (SSESSISESKS). Residues 1034–1045 (RKKRVTSKSRTK) are compositionally biased toward basic residues. Over residues 1103–1118 (QNHEISQRHDSEIKRR) the composition is skewed to basic and acidic residues. The span at 1119 to 1130 (REERKKRHHEKN) shows a compositional bias: basic residues.

Belongs to the CWC22 family. Component of the spliceosome C complex.

It localises to the nucleus speckle. In terms of biological role, male determiner protein (M-factor) that controls male somatic sexual differentiation. Acts as a dominant factor that regulates the mRNA splicing of transformer (tra) and doublesex (dsx) transcripts and promotes expression of male splice forms of tra and dsx. Probably acts as a component of the spliceosome C complex required for mRNA splicing factor and exon-junction complex (EJC) assembly. Hinders eIF4AIII from non-specifically binding RNA and escorts it to the splicing machinery to promote EJC assembly on mature mRNAs. In Musca domestica (House fly), this protein is Male determiner protein Mdmd(III).